The primary structure comprises 423 residues: Serine hydroxymethyltransferase (423 aa).

Residues leucine 125 and 129–131 each bind (6S)-5,6,7,8-tetrahydrofolate; that span reads GHL. Position 234 is an N6-(pyridoxal phosphate)lysine (lysine 234). Glutamate 249 serves as a coordination point for (6S)-5,6,7,8-tetrahydrofolate.

This sequence belongs to the SHMT family. As to quaternary structure, homodimer. The cofactor is pyridoxal 5'-phosphate.

The protein localises to the cytoplasm. It catalyses the reaction (6R)-5,10-methylene-5,6,7,8-tetrahydrofolate + glycine + H2O = (6S)-5,6,7,8-tetrahydrofolate + L-serine. It participates in one-carbon metabolism; tetrahydrofolate interconversion. It functions in the pathway amino-acid biosynthesis; glycine biosynthesis; glycine from L-serine: step 1/1. Its function is as follows. Catalyzes the reversible interconversion of serine and glycine with tetrahydrofolate (THF) serving as the one-carbon carrier. This reaction serves as the major source of one-carbon groups required for the biosynthesis of purines, thymidylate, methionine, and other important biomolecules. Also exhibits THF-independent aldolase activity toward beta-hydroxyamino acids, producing glycine and aldehydes, via a retro-aldol mechanism. In Thermobifida fusca (strain YX), this protein is Serine hydroxymethyltransferase.